A 257-amino-acid polypeptide reads, in one-letter code: Meiotically up-regulated gene 14 protein (257 aa).

It localises to the cytoplasm. The protein localises to the nucleus. Its function is as follows. Has a role in meiosis. This chain is Meiotically up-regulated gene 14 protein (mug14), found in Schizosaccharomyces pombe (strain 972 / ATCC 24843) (Fission yeast).